The chain runs to 264 residues: Thymidylate synthase (264 aa).

DUMP is bound at residue Arg-21. Position 51 (His-51) interacts with (6R)-5,10-methylene-5,6,7,8-tetrahydrofolate. Residue 126-127 (RR) coordinates dUMP. Cys-146 acts as the Nucleophile in catalysis. DUMP contacts are provided by residues 166 to 169 (RSVD), Asn-177, and 207 to 209 (HLY). Asp-169 serves as a coordination point for (6R)-5,10-methylene-5,6,7,8-tetrahydrofolate. (6R)-5,10-methylene-5,6,7,8-tetrahydrofolate is bound at residue Ala-263.

The protein belongs to the thymidylate synthase family. Bacterial-type ThyA subfamily. In terms of assembly, homodimer.

It localises to the cytoplasm. The enzyme catalyses dUMP + (6R)-5,10-methylene-5,6,7,8-tetrahydrofolate = 7,8-dihydrofolate + dTMP. The protein operates within pyrimidine metabolism; dTTP biosynthesis. Catalyzes the reductive methylation of 2'-deoxyuridine-5'-monophosphate (dUMP) to 2'-deoxythymidine-5'-monophosphate (dTMP) while utilizing 5,10-methylenetetrahydrofolate (mTHF) as the methyl donor and reductant in the reaction, yielding dihydrofolate (DHF) as a by-product. This enzymatic reaction provides an intracellular de novo source of dTMP, an essential precursor for DNA biosynthesis. In Geobacillus kaustophilus (strain HTA426), this protein is Thymidylate synthase.